The chain runs to 81 residues: Costars family protein ABRACL (81 aa).

This sequence belongs to the costars family.

The sequence is that of Costars family protein ABRACL (abracl) from Xenopus tropicalis (Western clawed frog).